The sequence spans 144 residues: MLLPKRVKYRRQHRPKTTGRSKGGNYVTFGEYGLQATTTSWITSRQIESARIAMTRFMKRGGKVWIKIFPHTPYTQKPLEVRMGAGKGAVEGWIAVAKPGRILFEIAGVNEEVAREALRLASHKLPVKTKFVKREELGGETNES.

The span at 1-19 (MLLPKRVKYRRQHRPKTTG) shows a compositional bias: basic residues. Residues 1–23 (MLLPKRVKYRRQHRPKTTGRSKG) form a disordered region.

Belongs to the universal ribosomal protein uL16 family. Part of the 50S ribosomal subunit.

Functionally, binds 23S rRNA and is also seen to make contacts with the A and possibly P site tRNAs. This chain is Large ribosomal subunit protein uL16, found in Staphylococcus saprophyticus subsp. saprophyticus (strain ATCC 15305 / DSM 20229 / NCIMB 8711 / NCTC 7292 / S-41).